The following is a 359-amino-acid chain: Uroporphyrinogen decarboxylase (359 aa).

Substrate is bound by residues 36 to 40, Asp-85, Tyr-160, Ser-215, and His-338; that span reads RQAGR.

It belongs to the uroporphyrinogen decarboxylase family. As to quaternary structure, homodimer.

It is found in the cytoplasm. The catalysed reaction is uroporphyrinogen III + 4 H(+) = coproporphyrinogen III + 4 CO2. It functions in the pathway porphyrin-containing compound metabolism; protoporphyrin-IX biosynthesis; coproporphyrinogen-III from 5-aminolevulinate: step 4/4. Its function is as follows. Catalyzes the decarboxylation of four acetate groups of uroporphyrinogen-III to yield coproporphyrinogen-III. The sequence is that of Uroporphyrinogen decarboxylase from Corynebacterium efficiens (strain DSM 44549 / YS-314 / AJ 12310 / JCM 11189 / NBRC 100395).